The sequence spans 428 residues: Maltoporin (428 aa).

The N-terminal stretch at 1-21 (MKKTLLAVAIGGAMFATSAAA) is a signal peptide.

It belongs to the porin LamB (TC 1.B.3) family. As to quaternary structure, homotrimer formed of three 18-stranded antiparallel beta-barrels, containing three independent channels.

The protein resides in the cell outer membrane. The enzyme catalyses beta-maltose(in) = beta-maltose(out). Functionally, involved in the transport of maltose and maltodextrins. In Mannheimia succiniciproducens (strain KCTC 0769BP / MBEL55E), this protein is Maltoporin.